The chain runs to 369 residues: Protein-glutamate methylesterase/protein-glutamine glutaminase 1 (369 aa).

Positions Lys-3–Asp-120 constitute a Response regulatory domain. Residue Asp-54 is modified to 4-aspartylphosphate. A compositionally biased stretch (low complexity) spans Arg-136 to Ser-168. The tract at residues Arg-136–Val-174 is disordered. Residues Gly-177 to Lys-369 enclose the CheB-type methylesterase domain. Catalysis depends on residues Ser-189, His-216, and Asp-312.

It belongs to the CheB family. In terms of processing, phosphorylated by CheA. Phosphorylation of the N-terminal regulatory domain activates the methylesterase activity.

Its subcellular location is the cytoplasm. It catalyses the reaction [protein]-L-glutamate 5-O-methyl ester + H2O = L-glutamyl-[protein] + methanol + H(+). The catalysed reaction is L-glutaminyl-[protein] + H2O = L-glutamyl-[protein] + NH4(+). Involved in chemotaxis. Part of a chemotaxis signal transduction system that modulates chemotaxis in response to various stimuli. Catalyzes the demethylation of specific methylglutamate residues introduced into the chemoreceptors (methyl-accepting chemotaxis proteins or MCP) by CheR. Also mediates the irreversible deamidation of specific glutamine residues to glutamic acid. The polypeptide is Protein-glutamate methylesterase/protein-glutamine glutaminase 1 (Oleidesulfovibrio alaskensis (strain ATCC BAA-1058 / DSM 17464 / G20) (Desulfovibrio alaskensis)).